The following is a 553-amino-acid chain: Arylsulfatase K (553 aa).

An N-terminal signal peptide occupies residues 1 to 16 (MLLLLVSVVAALALAA). Ca(2+)-binding residues include Asp40 and Cys80. Cys80 (nucleophile) is an active-site residue. At Cys80 the chain carries 3-oxoalanine (Cys). N-linked (GlcNAc...) asparagine glycosylation occurs at Asn108. Lys128 lines the substrate pocket. N-linked (GlcNAc...) asparagine glycosylation occurs at Asn191. His249 is a substrate binding site. Asn260 carries an N-linked (GlcNAc...) asparagine glycan. Ca(2+)-binding residues include Asp311 and His312. Residues Asn373, Asn411, and Asn496 are each glycosylated (N-linked (GlcNAc...) asparagine). Residues 530–553 (SPLASSPTQSTSGSQPTLPQSTSG) are disordered. Low complexity predominate over residues 534 to 553 (SSPTQSTSGSQPTLPQSTSG).

It belongs to the sulfatase family. Ca(2+) serves as cofactor. Post-translationally, the conversion to 3-oxoalanine (also known as C-formylglycine, FGly), of a serine or cysteine residue in prokaryotes and of a cysteine residue in eukaryotes, is critical for catalytic activity. The 75-kDa precursor undergoes proteolytic processing to yield a 23 kDa form. In terms of processing, N-glycosylated with both high mannose and complex type sugars.

It is found in the secreted. Its subcellular location is the lysosome. The catalysed reaction is an aryl sulfate + H2O = a phenol + sulfate + H(+). The enzyme catalyses Hydrolysis of the 2-sulfate groups of the 2-O-sulfo-D-glucuronate residues of chondroitin sulfate, heparin and heparitin sulfate.. Functionally, catalyzes the hydrolysis of pseudosubstrates such as p-nitrocatechol sulfate and p-nitrophenyl sulfate. Catalyzes the hydrolysis of the 2-sulfate groups of the 2-O-sulfo-D-glucuronate residues of chondroitin sulfate, heparin and heparitin sulfate. Acts selectively on 2-sulfoglucuronate and lacks activity against 2-sulfoiduronate. The sequence is that of Arylsulfatase K (Arsk) from Mus musculus (Mouse).